We begin with the raw amino-acid sequence, 236 residues long: 2,3,4,5-tetrahydropyridine-2,6-dicarboxylate N-acetyltransferase (236 aa).

It belongs to the transferase hexapeptide repeat family. DapH subfamily.

The enzyme catalyses (S)-2,3,4,5-tetrahydrodipicolinate + acetyl-CoA + H2O = L-2-acetamido-6-oxoheptanedioate + CoA. It participates in amino-acid biosynthesis; L-lysine biosynthesis via DAP pathway; LL-2,6-diaminopimelate from (S)-tetrahydrodipicolinate (acetylase route): step 1/3. Catalyzes the transfer of an acetyl group from acetyl-CoA to tetrahydrodipicolinate. The protein is 2,3,4,5-tetrahydropyridine-2,6-dicarboxylate N-acetyltransferase of Clostridium perfringens (strain SM101 / Type A).